The following is a 161-amino-acid chain: Urease accessory protein UreE (161 aa).

It belongs to the UreE family.

It localises to the cytoplasm. In terms of biological role, involved in urease metallocenter assembly. Binds nickel. Probably functions as a nickel donor during metallocenter assembly. In Arthrobacter sp. (strain FB24), this protein is Urease accessory protein UreE.